Reading from the N-terminus, the 573-residue chain is Delta 8-(E)-sphingolipid desaturase (573 aa).

Positions 2–77 constitute a Cytochrome b5 heme-binding domain; the sequence is SRVLSRRDIA…FKIWKIGRID (76 aa). The heme site is built by His-37 and His-60. Residues 228–248 form a helical membrane-spanning segment; that stretch reads LFGISFYLLSLKWFAISAICL. The short motif at 260 to 264 is the Histidine box-1 element; that stretch reads HDAGH. The helical transmembrane segment at 273-293 threads the bilayer; that stretch reads VDNIIGMTVASWIGGLSLGWW. A Histidine box-2 motif is present at residues 297-301; it reads HDVHH. A run of 3 helical transmembrane segments spans residues 353 to 372, 393 to 413, and 422 to 442; these read YLYY…LSWM, LAEL…KQMP, and VMIS…SHFA. The Histidine box-3 motif lies at 481 to 485; it reads QVIHH.

This sequence belongs to the fatty acid desaturase type 1 family.

Its subcellular location is the membrane. It catalyses the reaction an N-acylsphing-4-enine + 2 Fe(II)-[cytochrome b5] + O2 + 2 H(+) = a (4E,8E)-4-sphinga-4,8-dienine ceramide + 2 Fe(III)-[cytochrome b5] + 2 H2O. It functions in the pathway lipid metabolism; sphingolipid metabolism. Its function is as follows. Delta(8)-fatty-acid desaturase which introduces a double bond at the 8-position in the long-chain base (LCB) of ceramides. Required for the formation of the di-unsaturated sphingoid base (E,E)-sphinga-4,8-dienine during glucosylceramide (GluCer) biosynthesis. The protein is Delta 8-(E)-sphingolipid desaturase of Kluyveromyces lactis (Yeast).